The chain runs to 429 residues: Serine--tRNA ligase (429 aa).

235–237 lines the L-serine pocket; the sequence is TAE. Position 266–268 (266–268) interacts with ATP; that stretch reads RSE. Glu-289 contributes to the L-serine binding site. 353 to 356 contacts ATP; sequence EISS. L-serine is bound at residue Ser-389.

The protein belongs to the class-II aminoacyl-tRNA synthetase family. Type-1 seryl-tRNA synthetase subfamily. Homodimer. The tRNA molecule binds across the dimer.

It is found in the cytoplasm. It catalyses the reaction tRNA(Ser) + L-serine + ATP = L-seryl-tRNA(Ser) + AMP + diphosphate + H(+). It carries out the reaction tRNA(Sec) + L-serine + ATP = L-seryl-tRNA(Sec) + AMP + diphosphate + H(+). It participates in aminoacyl-tRNA biosynthesis; selenocysteinyl-tRNA(Sec) biosynthesis; L-seryl-tRNA(Sec) from L-serine and tRNA(Sec): step 1/1. Its function is as follows. Catalyzes the attachment of serine to tRNA(Ser). Is also able to aminoacylate tRNA(Sec) with serine, to form the misacylated tRNA L-seryl-tRNA(Sec), which will be further converted into selenocysteinyl-tRNA(Sec). The protein is Serine--tRNA ligase of Haemophilus influenzae (strain PittEE).